The primary structure comprises 669 residues: Gametogenetin-binding protein 2 (669 aa).

Disordered regions lie at residues 375–421 (QEKK…GNPC) and 452–475 (PHSN…SQEG). Over residues 376–388 (EKKRQKKNRKKNK) the composition is skewed to basic residues. Polar residues predominate over residues 398–408 (ETKSANPSQKN).

Its subcellular location is the cytoplasm. Functionally, may be involved in spermatogenesis. The polypeptide is Gametogenetin-binding protein 2 (ggnbp2) (Xenopus tropicalis (Western clawed frog)).